The primary structure comprises 370 residues: Aspartate beta-hydroxylase domain-containing protein 2 (370 aa).

The Cytoplasmic portion of the chain corresponds to 1–57; that stretch reads MVWALPRTSSPSCIAPSYKPDSGWIKMSAEWLIDWSCLLNGLRDLIAGCIQAVRDCN. A helical transmembrane segment spans residues 58-78; the sequence is SFALTTVICLLMLFAWYCYRV. At 79-370 the chain is on the lumenal side; sequence GKDQPRSPFA…ALDSIFAPGR (292 aa). The N-linked (GlcNAc...) asparagine glycan is linked to asparagine 212. The 2-oxoglutarate site is built by tryptophan 229 and serine 273. Histidine 284 is a Fe cation binding site. 293 to 295 contacts 2-oxoglutarate; sequence RCH. Residue histidine 329 coordinates Fe cation. Arginine 342 is a binding site for 2-oxoglutarate.

It belongs to the aspartyl/asparaginyl beta-hydroxylase family. Fe cation is required as a cofactor.

Its subcellular location is the membrane. May function as 2-oxoglutarate-dependent dioxygenase. This Xenopus tropicalis (Western clawed frog) protein is Aspartate beta-hydroxylase domain-containing protein 2 (asphd2).